The chain runs to 156 residues: Small ribosomal subunit protein uS7 (156 aa).

This sequence belongs to the universal ribosomal protein uS7 family. Part of the 30S ribosomal subunit. Contacts proteins S9 and S11.

In terms of biological role, one of the primary rRNA binding proteins, it binds directly to 16S rRNA where it nucleates assembly of the head domain of the 30S subunit. Is located at the subunit interface close to the decoding center, probably blocks exit of the E-site tRNA. The sequence is that of Small ribosomal subunit protein uS7 from Proteus mirabilis (strain HI4320).